A 122-amino-acid chain; its full sequence is Large ribosomal subunit protein uL14 (122 aa).

Belongs to the universal ribosomal protein uL14 family. As to quaternary structure, part of the 50S ribosomal subunit. Forms a cluster with proteins L3 and L19. In the 70S ribosome, L14 and L19 interact and together make contacts with the 16S rRNA in bridges B5 and B8.

Its function is as follows. Binds to 23S rRNA. Forms part of two intersubunit bridges in the 70S ribosome. The chain is Large ribosomal subunit protein uL14 from Coxiella burnetii (strain RSA 331 / Henzerling II).